The sequence spans 369 residues: Anhydro-N-acetylmuramic acid kinase (369 aa).

Residue 12 to 19 (GTSMDGVD) coordinates ATP.

It belongs to the anhydro-N-acetylmuramic acid kinase family.

It catalyses the reaction 1,6-anhydro-N-acetyl-beta-muramate + ATP + H2O = N-acetyl-D-muramate 6-phosphate + ADP + H(+). Its pathway is amino-sugar metabolism; 1,6-anhydro-N-acetylmuramate degradation. It participates in cell wall biogenesis; peptidoglycan recycling. Its function is as follows. Catalyzes the specific phosphorylation of 1,6-anhydro-N-acetylmuramic acid (anhMurNAc) with the simultaneous cleavage of the 1,6-anhydro ring, generating MurNAc-6-P. Is required for the utilization of anhMurNAc either imported from the medium or derived from its own cell wall murein, and thus plays a role in cell wall recycling. In Shewanella oneidensis (strain ATCC 700550 / JCM 31522 / CIP 106686 / LMG 19005 / NCIMB 14063 / MR-1), this protein is Anhydro-N-acetylmuramic acid kinase.